Reading from the N-terminus, the 434-residue chain is D-amino acid dehydrogenase (434 aa).

3 to 17 serves as a coordination point for FAD; that stretch reads VIVLGSGVIGTTTAY.

Belongs to the DadA oxidoreductase family. Requires FAD as cofactor.

It catalyses the reaction a D-alpha-amino acid + A + H2O = a 2-oxocarboxylate + AH2 + NH4(+). Oxidative deamination of D-amino acids. In Bordetella parapertussis (strain 12822 / ATCC BAA-587 / NCTC 13253), this protein is D-amino acid dehydrogenase.